The chain runs to 189 residues: dTTP/UTP pyrophosphatase (189 aa).

D71 (proton acceptor) is an active-site residue.

Belongs to the Maf family. YhdE subfamily. Requires a divalent metal cation as cofactor.

It is found in the cytoplasm. The enzyme catalyses dTTP + H2O = dTMP + diphosphate + H(+). The catalysed reaction is UTP + H2O = UMP + diphosphate + H(+). In terms of biological role, nucleoside triphosphate pyrophosphatase that hydrolyzes dTTP and UTP. May have a dual role in cell division arrest and in preventing the incorporation of modified nucleotides into cellular nucleic acids. The chain is dTTP/UTP pyrophosphatase from Pseudoalteromonas translucida (strain TAC 125).